Consider the following 503-residue polypeptide: Probable DNA ligase (503 aa).

ATP is bound at residue Asp-212. The active-site N6-AMP-lysine intermediate is Lys-214. ATP contacts are provided by Arg-219, Arg-234, Glu-263, Phe-296, Arg-368, and Lys-374.

The protein belongs to the ATP-dependent DNA ligase family. The cofactor is Mg(2+).

The enzyme catalyses ATP + (deoxyribonucleotide)n-3'-hydroxyl + 5'-phospho-(deoxyribonucleotide)m = (deoxyribonucleotide)n+m + AMP + diphosphate.. Its function is as follows. DNA ligase that seals nicks in double-stranded DNA during DNA replication, DNA recombination and DNA repair. This is Probable DNA ligase from Kineococcus radiotolerans (strain ATCC BAA-149 / DSM 14245 / SRS30216).